A 645-amino-acid polypeptide reads, in one-letter code: tRNA 5-methylaminomethyl-2-thiouridine biosynthesis bifunctional protein MnmC (645 aa).

Residues 1–230 (MPMSEPIDWL…KRHNLHAVFD (230 aa)) form a tRNA (mnm(5)s(2)U34)-methyltransferase region. Residues 254–645 (LGAGIAGAAA…LASERLGRRR (392 aa)) form an FAD-dependent cmnm(5)s(2)U34 oxidoreductase region.

This sequence in the N-terminal section; belongs to the methyltransferase superfamily. tRNA (mnm(5)s(2)U34)-methyltransferase family. The protein in the C-terminal section; belongs to the DAO family. FAD serves as cofactor.

It localises to the cytoplasm. The catalysed reaction is 5-aminomethyl-2-thiouridine(34) in tRNA + S-adenosyl-L-methionine = 5-methylaminomethyl-2-thiouridine(34) in tRNA + S-adenosyl-L-homocysteine + H(+). Its function is as follows. Catalyzes the last two steps in the biosynthesis of 5-methylaminomethyl-2-thiouridine (mnm(5)s(2)U) at the wobble position (U34) in tRNA. Catalyzes the FAD-dependent demodification of cmnm(5)s(2)U34 to nm(5)s(2)U34, followed by the transfer of a methyl group from S-adenosyl-L-methionine to nm(5)s(2)U34, to form mnm(5)s(2)U34. The polypeptide is tRNA 5-methylaminomethyl-2-thiouridine biosynthesis bifunctional protein MnmC (Delftia acidovorans (strain DSM 14801 / SPH-1)).